The following is a 97-amino-acid chain: Large ribosomal subunit protein bL25 (97 aa).

It belongs to the bacterial ribosomal protein bL25 family. In terms of assembly, part of the 50S ribosomal subunit; part of the 5S rRNA/L5/L18/L25 subcomplex. Contacts the 5S rRNA. Binds to the 5S rRNA independently of L5 and L18.

Its function is as follows. This is one of the proteins that binds to the 5S RNA in the ribosome where it forms part of the central protuberance. This chain is Large ribosomal subunit protein bL25, found in Blochmanniella pennsylvanica (strain BPEN).